Reading from the N-terminus, the 312-residue chain is Olfactory receptor 4F3/4F16/4F29 (312 aa).

Residues 1 to 25 (MDGENHSVVSEFLFLGLTHSWEIQL) lie on the Extracellular side of the membrane. The N-linked (GlcNAc...) asparagine glycan is linked to N5. The chain crosses the membrane as a helical span at residues 26 to 49 (LLLVFSSVLYVASITGNILIVFSV). The Cytoplasmic segment spans residues 50 to 57 (TTDPHLHS). A helical membrane pass occupies residues 58–79 (PMYFLLASLSFIDLGACSVTSP). Topologically, residues 80–100 (KMIYDLFRKRKVISFGGCIAQ) are extracellular. The cysteines at positions 97 and 189 are disulfide-linked. Residues 101 to 120 (IFFIHVVGGVEMVLLIAMAF) traverse the membrane as a helical segment. At 121–139 (DRYVALCKPLHYLTIMSPR) the chain is on the cytoplasmic side. Residues 140–158 (MCLSFLAVAWTLGVSHSLF) form a helical membrane-spanning segment. Residues 159 to 195 (QLAFLVNLAFCGPNVLDSFYCDLPRLLRLACTDTYRL) lie on the Extracellular side of the membrane. A helical membrane pass occupies residues 196–219 (QFMVTVNSGFICVGTFFILLISYV). Residues 220–235 (FILFTVWKHSSGGSSK) lie on the Cytoplasmic side of the membrane. A helical membrane pass occupies residues 236 to 258 (ALSTLSAHSTVVLLFFGPPMFVY). At 259–269 (TRPHPNSQMDK) the chain is on the extracellular side. The helical transmembrane segment at 270 to 289 (FLAIFDAVLTPFLNPVVYTF) threads the bilayer. Topologically, residues 290–312 (RNKEMKAAIKRVCKQLVIYKRIS) are cytoplasmic.

Belongs to the G-protein coupled receptor 1 family.

It localises to the cell membrane. Functionally, odorant receptor. The polypeptide is Olfactory receptor 4F3/4F16/4F29 (OR4F3) (Homo sapiens (Human)).